The primary structure comprises 154 residues: 3-dehydroquinate dehydratase (154 aa).

Tyrosine 23 acts as the Proton acceptor in catalysis. The substrate site is built by asparagine 74, histidine 80, and aspartate 87. Histidine 100 acts as the Proton donor in catalysis. Residues 101–102 and arginine 111 contribute to the substrate site; that span reads LS.

This sequence belongs to the type-II 3-dehydroquinase family. Homododecamer.

It catalyses the reaction 3-dehydroquinate = 3-dehydroshikimate + H2O. Its pathway is metabolic intermediate biosynthesis; chorismate biosynthesis; chorismate from D-erythrose 4-phosphate and phosphoenolpyruvate: step 3/7. In terms of biological role, catalyzes a trans-dehydration via an enolate intermediate. This Actinobacillus pleuropneumoniae serotype 5b (strain L20) protein is 3-dehydroquinate dehydratase.